A 581-amino-acid polypeptide reads, in one-letter code: Arginine--tRNA ligase (581 aa).

A 'HIGH' region motif is present at residues 122–132 (PNVAKPMHVGH).

The protein belongs to the class-I aminoacyl-tRNA synthetase family. In terms of assembly, monomer.

The protein localises to the cytoplasm. The catalysed reaction is tRNA(Arg) + L-arginine + ATP = L-arginyl-tRNA(Arg) + AMP + diphosphate. This Francisella tularensis subsp. novicida (strain U112) protein is Arginine--tRNA ligase.